We begin with the raw amino-acid sequence, 98 residues long: Large ribosomal subunit protein uL23 (98 aa).

Belongs to the universal ribosomal protein uL23 family. In terms of assembly, part of the 50S ribosomal subunit. Contacts protein L29, and trigger factor when it is bound to the ribosome.

Functionally, one of the early assembly proteins it binds 23S rRNA. One of the proteins that surrounds the polypeptide exit tunnel on the outside of the ribosome. Forms the main docking site for trigger factor binding to the ribosome. The chain is Large ribosomal subunit protein uL23 from Roseobacter denitrificans (strain ATCC 33942 / OCh 114) (Erythrobacter sp. (strain OCh 114)).